A 166-amino-acid chain; its full sequence is Phospholipase A2 inhibitor clone 02/03/06/07 (166 aa).

The first 19 residues, 1-19 (MRLILLSGLLLLGTFLANG), serve as a signal peptide directing secretion. In terms of domain architecture, C-type lectin spans 46-161 (LKHAFLTVHK…CDDNLLVVCE (116 aa)). Intrachain disulfides connect Cys-83-Cys-160 and Cys-138-Cys-152. Asn-122 is a glycosylation site (N-linked (GlcNAc...) asparagine).

The protein belongs to the alpha-type phospholipase A2 inhibitor family. In terms of assembly, homotrimer; non-covalently linked. Expressed by the liver.

The protein localises to the secreted. Functionally, this phospholipase A2 inhibitor binds directly phospholipase A2 in the presence or absence of calcium. This is Phospholipase A2 inhibitor clone 02/03/06/07 from Lachesis muta muta (Bushmaster).